The sequence spans 373 residues: sn-glycerol-3-phosphate import ATP-binding protein UgpC 2 (373 aa).

Positions 4–234 (IDIRQVRKSY…PASTFVASFI (231 aa)) constitute an ABC transporter domain. Residue 36–43 (GPSGCGKS) coordinates ATP.

The protein belongs to the ABC transporter superfamily. sn-glycerol-3-phosphate importer (TC 3.A.1.1.3) family. The complex is composed of two ATP-binding proteins (UgpC), two transmembrane proteins (UgpA and UgpE) and a solute-binding protein (UgpB).

Its subcellular location is the cell inner membrane. The catalysed reaction is sn-glycerol 3-phosphate(out) + ATP + H2O = sn-glycerol 3-phosphate(in) + ADP + phosphate + H(+). Part of the ABC transporter complex UgpBAEC involved in sn-glycerol-3-phosphate (G3P) import. Responsible for energy coupling to the transport system. The protein is sn-glycerol-3-phosphate import ATP-binding protein UgpC 2 of Agrobacterium fabrum (strain C58 / ATCC 33970) (Agrobacterium tumefaciens (strain C58)).